A 441-amino-acid chain; its full sequence is Glutamate-1-semialdehyde 2,1-aminomutase (441 aa).

K275 carries the post-translational modification N6-(pyridoxal phosphate)lysine.

This sequence belongs to the class-III pyridoxal-phosphate-dependent aminotransferase family. HemL subfamily. In terms of assembly, homodimer. It depends on pyridoxal 5'-phosphate as a cofactor.

It is found in the cytoplasm. It catalyses the reaction (S)-4-amino-5-oxopentanoate = 5-aminolevulinate. Its pathway is porphyrin-containing compound metabolism; protoporphyrin-IX biosynthesis; 5-aminolevulinate from L-glutamyl-tRNA(Glu): step 2/2. The sequence is that of Glutamate-1-semialdehyde 2,1-aminomutase from Deinococcus deserti (strain DSM 17065 / CIP 109153 / LMG 22923 / VCD115).